A 66-amino-acid polypeptide reads, in one-letter code: Protein I177L (66 aa).

The protein belongs to the asfivirus I177L family.

Its subcellular location is the virion. The chain is Protein I177L from African swine fever virus (isolate Tick/Malawi/Lil 20-1/1983) (ASFV).